We begin with the raw amino-acid sequence, 739 residues long: Catalase-peroxidase 2 (739 aa).

The N-terminal stretch at 1–26 (MKKSTIPTLSALTLAMSLAFGGSVIA) is a signal peptide. Positions 105 to 227 (WHSAGVYRIF…MGATQMGLIY (123 aa)) form a cross-link, tryptophyl-tyrosyl-methioninium (Trp-Tyr) (with M-253). Residue His-106 is the Proton acceptor of the active site. Positions 227 to 253 (YVNPEGPNGVPDPLASAKEIRDTFGRM) form a cross-link, tryptophyl-tyrosyl-methioninium (Tyr-Met) (with W-105). Heme b is bound at residue His-268.

It belongs to the peroxidase family. Peroxidase/catalase subfamily. Homodimer or homotetramer. It depends on heme b as a cofactor. Post-translationally, formation of the three residue Trp-Tyr-Met cross-link is important for the catalase, but not the peroxidase activity of the enzyme.

It carries out the reaction H2O2 + AH2 = A + 2 H2O. It catalyses the reaction 2 H2O2 = O2 + 2 H2O. Its function is as follows. Bifunctional enzyme with both catalase and broad-spectrum peroxidase activity. The polypeptide is Catalase-peroxidase 2 (Shewanella sp. (strain MR-7)).